Consider the following 143-residue polypeptide: Insertion element IS2 uncharacterized 16.4 kDa protein (143 aa).

This Escherichia coli protein is Insertion element IS2 uncharacterized 16.4 kDa protein.